Here is a 221-residue protein sequence, read N- to C-terminus: Prolactin-3B1 (221 aa).

The signal sequence occupies residues M1–S30. 2 cysteine pairs are disulfide-bonded: C81–C196 and C213–C221.

Belongs to the somatotropin/prolactin family.

Its subcellular location is the secreted. This Mesocricetus auratus (Golden hamster) protein is Prolactin-3B1 (PRL3B1).